A 2138-amino-acid chain; its full sequence is MEGPSHVYLFGDQTADFDSGLRRLLHAKNDSLLAAFFQKSYYALRKEITSLPPSERQGFPRFTSIVDLLARFKESGPNPALESALTTIHQLGCFIHYYGDLGHAYPSADESCIIGLCTGQLASAAVSSSRTIGELISAGIETVVLALRLGMCVLKVQELIEPSKSATPSWSVLISGMHEPEAENLIQQYAKKNALPRVSQPYISAVSPNGLTISGPPTFLSRFIEDSVSKEHKPTRVPIHGPYHASHLYDDRDINRILESWPTEQFMTFVPQIPVISSETGKEFQAESLEQLLRLSLQEILQRQLCWDKVIESCQETLELATTCTLFPISSTATQSLFNSLKKAGVSNLEVDSTIGDVQKDSEGDNRTGRAEQSKIAIIGLSGRFPESPDTEAFWDLLKKGLDVHREVPPERWDVKAHVDKDGKIRNTSQVQYGCWYNDAGMFDPRFFNMSPREALQADPAQRLALLTAYEALEMAGFIPDSTPSTQKNRVGVFYGMTSDDYREVNSGQDIDTYFIPGGNRAFTPGRINYYFKFSGPSVSVDTACSSSLAAIHVACNSLWRNECDSAVAGGVNILTNPDNHAGLDRGHFLSRTGNCTTFDDGADGYCRADGIGSIVIKRLEDAQADNDPIYGIIGGAYTNHSAEAVSITRPHVGAQSFIFDKLLNESNSDPKEISYIEMHGTGTQAGDAVEMQSVLDVFAPDYRRGPAQSLHLGSAKSNVGHGESASGVTALIKVLMMMQKNMIPPHCGIKTKINHNFPTDFPQRNVHIASEPTPWNRPNGGKRKTFVNNFSAAGGNTALMVEDGPLDEENVEDPRSAHPVLVSARSQSALKNNISALVQYIDKNKNLFNSNEASLLANLSYTTTARRIHHPFRVAVTGSTLDEVRSGLAPIVNRDSISPAPANAPGIGFVFTGQGAQYTGMGRQLFESCSQFRAHIEHLNCIGQSQGFPSILSLVDGSVPIEEHSPVVTQLGTTCVQMALTKYWMSLGISPAFVIGHSLGEFAALNASGVLTTSDTIYLAGRRAQLLTEQIKVGTHAMLAVKSSVAQVKQFLDDATEVACINAPSETVISGAREKIDELAQTLTNEGFKATKLNVPFAFHSAQVEPILESLSEIGKGVNFNAPSIPFVSALLGDVINESNSELLGPNYLTRHCRETVNFLGALEATRHSNLMNDKTIWIEIGSHPVCSGMVKATFGPQATTVASLRRQEDTWKVLSASVSALYMAGIELRWKEYHQDFTAGHKVLPLPSYKWDLKNYWIPYTNNFCLLKGAPAVPVAEAAPVAVFLSSAAQRVLETSGDNSSASIVIENDIADPELNRVIAGHKVNGACLTPSSLYADIAQTLGEYLVQNYKPEWKDRGFDICNMMVPKPLIAKGGKQLFRVSATANWAEESAKVQVWSVTPEGKKILDHASCNIKFFDPSPYELEWKRSSYLIKRSIEHLQESTISGQAHRMKRGMVYKLFASLVDYDDNYKSMREVILDSEQHEATAVVKFEAPPGNFHRNPFWIDSIGHLSGFIMNASDNTDSKNQVFVNHGWDSMRCLKKFDPSVTYRTYVRMQPWKDSIWAGDVYMFDGDDVVAVYGGVKFQGLARKILDMALPPGGASAPKPAAKRVPAPINVQKAKPSVTKKASPSPKSGLPSMATRALAILAEEVGLAASEMTDDLNFADYGVDSLLSLTVTGRYREDMGLDLDSTVFVDSPTVKDFKHLLAQMGPGESSDGSSSEGDMSSAASSTDLSSPNTSGLPTPANEKSMTHGLQGQNDSMRQIASILAEEIGVDSEELLGDANLGEMGLDSLMSLTVLGKIREDLDLDLPGEFFIENQTLDDIETTLDLKPKLAPAEPIRLPEQIPVEAPVVAHSTATQHPPATSILLQGNPKTATQSLFLFPDGSGSATSYATIPGISPDVCVYGLNCPYMRTPENLKFSLDELTAPYVAEIRRRQPTGPYNFGGWSAGGICAYDAARKLIFEEGERVERLLLLDSPFPIGLEKLPPRLYSFFDTIGLFGEGKAPPPKWLLPHFLAFIDSLDAYKAVPFPYEDPKHADKLPKTFMVWAKDGVCSKPGDARPAPAADGSADPREMLWLLNNRTDLGPNGWDTLVGPKHVGGITVMEDANHFTMTRGQKAKELARFIANSMASA.

The interval 8–244 (YLFGDQTADF…TRVPIHGPYH (237 aa)) is N-terminal acylcarrier protein transacylase domain (SAT). The 432-residue stretch at 373–804 (QSKIAIIGLS…GGNTALMVED (432 aa)) folds into the Ketosynthase family 3 (KS3) domain. Residues cysteine 545, histidine 680, and histidine 722 each act as for beta-ketoacyl synthase activity in the active site. The interval 910–1229 (FVFTGQGAQY…VSALYMAGIE (320 aa)) is malonyl-CoA:ACP transacylase (MAT) domain. Residue serine 999 is the For acyl/malonyl transferase activity of the active site. Positions 1288-1601 (SSAAQRVLET…RKILDMALPP (314 aa)) are product template (PT) domain. Residues 1292–1423 (QRVLETSGDN…CNIKFFDPSP (132 aa)) are N-terminal hotdog fold. Residues 1292 to 1596 (QRVLETSGDN…FQGLARKILD (305 aa)) form the PKS/mFAS DH domain. Histidine 1324 (proton acceptor; for dehydratase activity) is an active-site residue. The interval 1451–1596 (AHRMKRGMVY…FQGLARKILD (146 aa)) is C-terminal hotdog fold. The Proton donor; for dehydratase activity role is filled by aspartate 1509. Residues 1640-1714 (PSMATRALAI…DFKHLLAQMG (75 aa)) form the Carrier 1 domain. Serine 1674 bears the O-(pantetheine 4'-phosphoryl)serine mark. Residues 1712–1758 (QMGPGESSDGSSSEGDMSSAASSTDLSSPNTSGLPTPANEKSMTHGL) are disordered. A compositionally biased stretch (low complexity) spans 1713–1739 (MGPGESSDGSSSEGDMSSAASSTDLSS). Polar residues predominate over residues 1740–1758 (PNTSGLPTPANEKSMTHGL). The Carrier 2 domain maps to 1759-1836 (QGQNDSMRQI…DIETTLDLKP (78 aa)). Residue serine 1796 is modified to O-(pantetheine 4'-phosphoryl)serine. The segment at 1863–2135 (TQHPPATSIL…ELARFIANSM (273 aa)) is claisen cyclase domain. The For Claisen cyclase activity role is filled by serine 1953.

The catalysed reaction is 6 malonyl-CoA + acetyl-CoA + 6 H(+) = naphtopyrone YWA1 + 6 CO2 + 7 CoA + H2O. It participates in pigment biosynthesis. Its pathway is polyketide biosynthesis; heptaketide naphthopyrone YWA1 biosynthesis. Non-reducing polyketide synthase involved in the biosynthesis of a yellow conidial pigment. Probably forms the heptaketide naphthopyrene YWA1 via condensation of acetate units. The polypeptide is Conidial yellow pigment biosynthesis polyketide synthase melA (Penicillium expansum (Blue mold rot fungus)).